The primary structure comprises 817 residues: V-type proton ATPase subunit a1 (817 aa).

Topologically, residues 1–422 (MEEFLDKLPQ…PAVYSVVTYP (422 aa)) are cytoplasmic. Residues 97–133 (DIALGDLERQLADHEHEVLEMNSNSEKLRQTYNELLE) adopt a coiled-coil conformation. Residues 423 to 443 (FLFAVMFGDWGHGLCLLLGAL) form a helical membrane-spanning segment. Residues 444 to 468 (YLLARERKLSTQKLGSFMEMLFGGR) are Vacuolar-facing. Residues 469–489 (YVILLMALFSIYCGLIYNEFF) form a helical membrane-spanning segment. At 490–547 (SVPFHIFGGSAYKCRDTTCSDAYTVGLIKYRDPYPFGVDPSWRGSRTELPYLNSLKMK) the chain is on the cytoplasmic side. A helical transmembrane segment spans residues 548 to 568 (MSILLGIAQMNLGLILSFFNA). Residues 569–580 (RFFGSSLDIRYQ) lie on the Vacuolar side of the membrane. The helical transmembrane segment at 581-601 (FIPQMIFLNSLFGYLSLLIII) threads the bilayer. Over 602-639 (KWCTGSQADLYHVMIYMFLSPTEELGENELFWGQRPLQ) the chain is Cytoplasmic. A helical transmembrane segment spans residues 640 to 660 (IVLLLLAFIAVPWMLFPKPFA). Residues 661–758 (LRKIHMERFQ…VLLLAWGYEN (98 aa)) lie on the Vacuolar side of the membrane. The helical transmembrane segment at 759–779 (ILIRLIGVAVFAFATAFILLM) threads the bilayer. At 780-817 (METLSAFLHALRLHWVEFMGKFFNGDGYKFKPFSFALI) the chain is on the cytoplasmic side.

Belongs to the V-ATPase 116 kDa subunit family. As to quaternary structure, V-ATPase is a heteromultimeric enzyme composed of a peripheral catalytic V1 complex (components A to H) attached to an integral membrane V0 proton pore complex (components: a, c, c'', d and e).

The protein localises to the vacuole membrane. It is found in the golgi apparatus. Its subcellular location is the trans-Golgi network membrane. In terms of biological role, essential component of the vacuolar proton pump (V-ATPase), a multimeric enzyme that catalyzes the translocation of protons across the membranes. Required for assembly and activity of the V-ATPase. Required during cell expansion. The protein is V-type proton ATPase subunit a1 of Arabidopsis thaliana (Mouse-ear cress).